A 496-amino-acid polypeptide reads, in one-letter code: Probable cytosol aminopeptidase (496 aa).

Mn(2+) is bound by residues lysine 264 and aspartate 269. Residue lysine 276 is part of the active site. The Mn(2+) site is built by aspartate 287, aspartate 346, and glutamate 348. Arginine 350 is a catalytic residue.

This sequence belongs to the peptidase M17 family. It depends on Mn(2+) as a cofactor.

The protein resides in the cytoplasm. It carries out the reaction Release of an N-terminal amino acid, Xaa-|-Yaa-, in which Xaa is preferably Leu, but may be other amino acids including Pro although not Arg or Lys, and Yaa may be Pro. Amino acid amides and methyl esters are also readily hydrolyzed, but rates on arylamides are exceedingly low.. It catalyses the reaction Release of an N-terminal amino acid, preferentially leucine, but not glutamic or aspartic acids.. Presumably involved in the processing and regular turnover of intracellular proteins. Catalyzes the removal of unsubstituted N-terminal amino acids from various peptides. This chain is Probable cytosol aminopeptidase, found in Geobacter sulfurreducens (strain ATCC 51573 / DSM 12127 / PCA).